The sequence spans 819 residues: Protein kinase C-binding protein NELL2 (819 aa).

Positions 1 to 24 (MHAMESRVLLRTFCVILGLGAVWG) are cleaved as a signal peptide. Asn56, Asn228, Asn296, and Asn301 each carry an N-linked (GlcNAc...) asparagine glycan. Residues 67–231 (PRSIKASTAT…AQCPDLNRTC (165 aa)) enclose the Laminin G-like domain. The region spanning 275 to 334 (RTCTVKGTTYRESESWTDGCKNCTCLNGTIQCETLVCPAPDCPPKSAPAYVDGKCCKECK) is the VWFC 1 domain. The 43-residue stretch at 400-442 (GYDFCSEKHTCMENSVCRNLNDRAVCSCRDGFRALREDNAYCE) folds into the EGF-like 1 domain. 3 cysteine pairs are disulfide-bonded: Cys404–Cys416, Cys410–Cys425, and Cys427–Cys441. Positions 443, 444, and 446 each coordinate Ca(2+). The EGF-like 2; calcium-binding domain maps to 443-484 (DIDECAEGRHYCRENTMCVNTPGSFMCICKTGYIRIDDYSCT). 9 cysteine pairs are disulfide-bonded: Cys447–Cys460, Cys454–Cys469, Cys471–Cys483, Cys489–Cys502, Cys496–Cys511, Cys513–Cys524, Cys528–Cys538, Cys532–Cys544, and Cys546–Cys555. Residues Asn462, Thr463, and Ser466 each coordinate Ca(2+). Positions 485 to 525 (EHDECLTNQHNCDENALCFNTVGGHNCVCKPGYTGNGTTCK) constitute an EGF-like 3; calcium-binding domain. Asn520 carries N-linked (GlcNAc...) asparagine glycosylation. Positions 526 to 556 (AFCKDGCRNGGACIAANVCACPQGFTGPSCE) constitute an EGF-like 4 domain. Thr551 carries O-linked (GlcNAc...) threonine glycosylation. Positions 558, 559, and 561 each coordinate Ca(2+). The EGF-like 5; calcium-binding domain occupies 558 to 604 (DIDECSEGFVQCDSRANCINLPGWYHCECRDGYHDNGMFAPGGESCE). 3 disulfides stabilise this stretch: Cys562-Cys575, Cys569-Cys584, and Cys586-Cys603. Residues Asn577, Leu578, and Trp581 each contribute to the Ca(2+) site. Residues Asp605, Ile606, and Glu608 each contribute to the Ca(2+) site. Positions 605 to 640 (DIDECGTGRHSCTNDTICFNLDGGYDCRCPHGKNCT) constitute an EGF-like 6; calcium-binding domain. Cystine bridges form between Cys609-Cys622, Cys616-Cys631, and Cys633-Cys639. N-linked (GlcNAc...) asparagine glycosylation is present at Asn618. Ca(2+) contacts are provided by Asn624, Leu625, and Gly628. N-linked (GlcNAc...) asparagine glycosylation is present at Asn638. Residues 701 to 759 (SQCLHQNGETVYNSGDTWVQDCRQCRCLQGEVDCWPLACPEVECEFSVLPENECCPRCV) enclose the VWFC 2 domain.

As to quaternary structure, homotrimer. Interacts with NICOL1; this interaction triggers epididymal differentiation. Interacts (via EGF domains) with ROBO3 (via FN domains); binding to ROBO3 induces repulsive guidance cue for commissural axons. Expressed in brain and testis but not in epididymis. Expressed in regions flanking the commissural axon trajectory, including the ventral horn.

Its subcellular location is the secreted. In terms of biological role, plays multiple roles in neural tissues, regulates neuronal proliferation, survival, differentiation, polarization, as well as axon guidance and synaptic functions. Plays an important role in axon development during neuronal differentiation through the MAPK intracellular signaling pathway. Via binding to its receptor ROBO3, plays a role in axon guidance, functioning as a repulsive axon guidance cue that contributes to commissural axon guidance to the midline. Required for neuron survival through the modulation of MAPK signaling pathways too. Involved in the regulation of hypothalamic GNRH secretion and the control of puberty. Functionally, epididymal-secreted protein that signals through a ROS1-pathway to regulate the epididymal initial segment (IS) maturation, sperm maturation and male fertility. The polypeptide is Protein kinase C-binding protein NELL2 (Mus musculus (Mouse)).